Here is a 497-residue protein sequence, read N- to C-terminus: L-asparagine permease (497 aa).

12 consecutive transmembrane segments (helical) span residues Q34–A54, M58–L78, V109–V129, V146–F166, F171–F191, L219–V239, I264–Y284, L298–S318, Y353–V373, F378–V398, A422–F442, and T448–V468.

This sequence belongs to the amino acid-polyamine-organocation (APC) superfamily. Amino acid transporter (AAT) (TC 2.A.3.1) family.

Its subcellular location is the cell inner membrane. This is L-asparagine permease (ansP) from Salmonella typhimurium (strain LT2 / SGSC1412 / ATCC 700720).